The primary structure comprises 88 residues: Putative membrane protein insertion efficiency factor (88 aa).

The disordered stretch occupies residues 68-88 (VPPPNSDTRARGEADARSHRL). Positions 75-88 (TRARGEADARSHRL) are enriched in basic and acidic residues.

Belongs to the UPF0161 family.

It is found in the cell inner membrane. In terms of biological role, could be involved in insertion of integral membrane proteins into the membrane. The polypeptide is Putative membrane protein insertion efficiency factor (Burkholderia orbicola (strain MC0-3)).